Consider the following 303-residue polypeptide: MGQCVTKCKNPSSTLGSKNGERESSKPHKRSSSHKEEHMSICGKASGEILVNGTKKGDASLEASQPLAVGVDTKKKEQGVGAELSSLQRIEELFRRYKDEREDAILEEGMERFCDDLCVDPTEFRVLVLAWKFQAATMCKFTRREFFEGCKSINADGIESICSQFPGLLNEAKQEDKFKDLYRFTFQFGLDSEEGQRSLHREIAIALWKLVFTQNKPLILDQWLEFLTENPSGIKGISRDTWNMFLNFTQVIGPDLSNYSEDEAWPSLFDTFVEWEMERRKSEEKTDCIPCLGTDHQSRDEQT.

The segment at 1-40 (MGQCVTKCKNPSSTLGSKNGERESSKPHKRSSSHKEEHMS) is disordered. Residue glycine 2 is the site of N-myristoyl glycine attachment. The 193-residue stretch at 85–277 (SSLQRIEELF…LFDTFVEWEM (193 aa)) folds into the DCUN1 domain.

May interact (via the DCUN1 domain) with unneddylated cullins.

It localises to the cell membrane. The protein resides in the cytoplasm. The protein localises to the nucleus. It is found in the perinuclear region. Contributes to the neddylation of all cullins by transferring NEDD8 from N-terminally acetylated NEDD8-conjugating E2s enzyme to different cullin C-terminal domain-RBX complexes. At the cell membrane, can promote and as well inhibit cullins neddylation. In Xenopus laevis (African clawed frog), this protein is DCN1-like protein 3.